The primary structure comprises 448 residues: Tubulin beta-2 chain (448 aa).

Residues Q11, E69, S138, G142, T143, G144, N204, and N226 each contribute to the GTP site. Position 69 (E69) interacts with Mg(2+). Positions 421–448 (EYQQYQDATADEDGEYEDELDGQEEEDM) are disordered. Over residues 429 to 448 (TADEDGEYEDELDGQEEEDM) the composition is skewed to acidic residues.

This sequence belongs to the tubulin family. Dimer of alpha and beta chains. A typical microtubule is a hollow water-filled tube with an outer diameter of 25 nm and an inner diameter of 15 nM. Alpha-beta heterodimers associate head-to-tail to form protofilaments running lengthwise along the microtubule wall with the beta-tubulin subunit facing the microtubule plus end conferring a structural polarity. Microtubules usually have 13 protofilaments but different protofilament numbers can be found in some organisms and specialized cells. The cofactor is Mg(2+).

The protein localises to the cytoplasm. Its subcellular location is the cytoskeleton. Tubulin is the major constituent of microtubules, a cylinder consisting of laterally associated linear protofilaments composed of alpha- and beta-tubulin heterodimers. Microtubules grow by the addition of GTP-tubulin dimers to the microtubule end, where a stabilizing cap forms. Below the cap, tubulin dimers are in GDP-bound state, owing to GTPase activity of alpha-tubulin. The polypeptide is Tubulin beta-2 chain (TUBB2) (Eleusine indica (Goosegrass)).